Here is a 336-residue protein sequence, read N- to C-terminus: Anthranilate phosphoribosyltransferase (336 aa).

5-phospho-alpha-D-ribose 1-diphosphate contacts are provided by residues Gly-79, 82–83 (GD), Thr-87, 89–92 (NIST), 107–115 (KHGNRSVSS), and Ser-119. Residue Gly-79 coordinates anthranilate. Ser-91 serves as a coordination point for Mg(2+). Residue Asn-110 participates in anthranilate binding. Residue Arg-165 coordinates anthranilate. Mg(2+) contacts are provided by Asp-224 and Glu-225.

This sequence belongs to the anthranilate phosphoribosyltransferase family. Homodimer. Mg(2+) serves as cofactor.

The enzyme catalyses N-(5-phospho-beta-D-ribosyl)anthranilate + diphosphate = 5-phospho-alpha-D-ribose 1-diphosphate + anthranilate. It participates in amino-acid biosynthesis; L-tryptophan biosynthesis; L-tryptophan from chorismate: step 2/5. Catalyzes the transfer of the phosphoribosyl group of 5-phosphorylribose-1-pyrophosphate (PRPP) to anthranilate to yield N-(5'-phosphoribosyl)-anthranilate (PRA). The sequence is that of Anthranilate phosphoribosyltransferase from Endomicrobium trichonymphae.